The following is a 687-amino-acid chain: MGQGLGIKSCDFQAARNNAEHHTNDISSQRLFVRRGQPFTISLHFQAPVHTFLRALKKVALIAQTGKQPSKANGTQATFSVSSLGDRKWWSAMVEERDDQSWTISVTTPADAIIGHYSLLLQISGRKQCLGQFTLLFNPWNREDAVFLGNEAQRKEYLLNQNGLIFLGTADCIQAEPWDFGQLEEDVIDLGLSLLTVDNQVEKWGNPVHVARVLGALLHILKEKSVLPTAKIQTTEERALLNKRRGSAPILRQWVTGHGRPVYEGQAWVLAAVACTVLRGLGIPARVVTTFTSAQGTGGDLLVNEYYNEEGLQNGEDNRGRAWIFQTSTECWMARPDLLEVYDGWQILYPSALKGGEVLEACDLVPVRAVKEGIVWLTPAASDIFASINASCVVWKCGEDGTLELTDSNTKYFGNNISTKNVDCDCHEDITQNYKYPEGSSQEKMVLEKVQKYRMKHKNDGIYPPCCETDDPLHLFLKAPSSLALGKNVEISVNLLNPTDQEKEVQLAIGLQAMYYNGVLAAKLWRKNFVLILSANSAKKISTSLFNSNFEQSLPENSFLRLTAMATHSSLPCFAQQDIAIRRPHLAIEMPETAEQHQTLIALVSIHNPLDVPLEDCVISIFGKGLIHREKSYRVNSVQPRNTLRTQLKFVPMKVGCQRLTVEMDCNMFQNLTNFRTVMVVAPKSPA.

Glycine 2 is lipidated: N-myristoyl glycine. Positions 31–39 are band 3 binding; that stretch reads LFVRRGQPF. Serine 247 is modified (phosphoserine).

The protein belongs to the transglutaminase superfamily. Transglutaminase family. In terms of assembly, component of the ankyrin-1 complex in the erythrocyte, composed of ANK1, RHCE, RHAG, SLC4A1, EPB42, GYPA, GYPB and AQP1. Interacts with SLC4A1 (via the cytoplasmic domain); this interaction is mediated by the SLC4A1 Band 3-I dimer. Interacts with ANK1 (via ANK 1-13 repeats). Interacts with AQP1 (via the C-terminal).

Its subcellular location is the cell membrane. The protein resides in the cytoplasm. The protein localises to the cytoskeleton. Component of the ankyrin-1 complex, a multiprotein complex involved in the stability and shape of the erythrocyte membrane. In Bos taurus (Bovine), this protein is Protein 4.2.